The primary structure comprises 701 residues: Polyribonucleotide nucleotidyltransferase (701 aa).

Asp487 and Asp493 together coordinate Mg(2+). The KH domain maps to 554–613 (PTMIAMKIDTDKIRDVIGKGGATIRAICEETKASIDIEDDGSIKIFGESKEAAEAARQRV). An S1 motif domain is found at 623-691 (GKIYIGKVER…NRGRIKLSIK (69 aa)).

This sequence belongs to the polyribonucleotide nucleotidyltransferase family. As to quaternary structure, component of the RNA degradosome, which is a multiprotein complex involved in RNA processing and mRNA degradation. The cofactor is Mg(2+).

It localises to the cytoplasm. The catalysed reaction is RNA(n+1) + phosphate = RNA(n) + a ribonucleoside 5'-diphosphate. In terms of biological role, involved in mRNA degradation. Catalyzes the phosphorolysis of single-stranded polyribonucleotides processively in the 3'- to 5'-direction. The polypeptide is Polyribonucleotide nucleotidyltransferase (Pseudomonas syringae pv. syringae (strain B728a)).